Consider the following 692-residue polypeptide: Elongation factor G (692 aa).

A tr-type G domain is found at 8–282 (EKVRNIGIAA…AVVDYLPAPS (275 aa)). GTP-binding positions include 17–24 (AHIDAGKT), 81–85 (DTPGH), and 135–138 (NKMD).

This sequence belongs to the TRAFAC class translation factor GTPase superfamily. Classic translation factor GTPase family. EF-G/EF-2 subfamily.

It localises to the cytoplasm. Its function is as follows. Catalyzes the GTP-dependent ribosomal translocation step during translation elongation. During this step, the ribosome changes from the pre-translocational (PRE) to the post-translocational (POST) state as the newly formed A-site-bound peptidyl-tRNA and P-site-bound deacylated tRNA move to the P and E sites, respectively. Catalyzes the coordinated movement of the two tRNA molecules, the mRNA and conformational changes in the ribosome. The polypeptide is Elongation factor G (Nostoc punctiforme (strain ATCC 29133 / PCC 73102)).